Here is a 232-residue protein sequence, read N- to C-terminus: Cytidylate kinase (232 aa).

19-27 (GPAGVGKTT) is a binding site for ATP.

The protein belongs to the cytidylate kinase family. Type 1 subfamily.

The protein resides in the cytoplasm. It carries out the reaction CMP + ATP = CDP + ADP. The enzyme catalyses dCMP + ATP = dCDP + ADP. This Nitratidesulfovibrio vulgaris (strain ATCC 29579 / DSM 644 / CCUG 34227 / NCIMB 8303 / VKM B-1760 / Hildenborough) (Desulfovibrio vulgaris) protein is Cytidylate kinase.